Here is a 495-residue protein sequence, read N- to C-terminus: Angiopoietin-2 (495 aa).

A signal peptide spans 1 to 18 (MWQIVFFTLSCDLVRAAA). N-linked (GlcNAc...) asparagine glycans are attached at residues Asn-88, Asn-118, Asn-132, Asn-150, Asn-239, and Asn-303. A coiled-coil region spans residues 165–247 (STNKLEKQIL…VNNSVLQKQQ (83 aa)). A Fibrinogen C-terminal domain is found at 274–494 (KEEQIIYRDC…GTTMMIRPAD (221 aa)). A disulfide bridge links Cys-283 with Cys-312. Ca(2+)-binding residues include Asp-428, Asp-430, Cys-432, and Cys-434. Cystine bridges form between Cys-432–Cys-434 and Cys-436–Cys-449.

Interacts with TEK/TIE2, competing for the same binding site as ANGPT1. Interacts with ITGA5. Interacts with SVEP1/polydom. Interacts with THBD; this interaction significantly inhibits the generation of activated PC and TAFIa/CPB2 by the thrombin/thrombomodulin complex.

The protein resides in the secreted. Functionally, binds to TEK/TIE2, competing for the ANGPT1 binding site, and modulating ANGPT1 signaling. Can induce tyrosine phosphorylation of TEK/TIE2 in the absence of ANGPT1. In the absence of angiogenic inducers, such as VEGF, ANGPT2-mediated loosening of cell-matrix contacts may induce endothelial cell apoptosis with consequent vascular regression. In concert with VEGF, it may facilitate endothelial cell migration and proliferation, thus serving as a permissive angiogenic signal. Involved in the regulation of lymphangiogenesis. The protein is Angiopoietin-2 (ANGPT2) of Canis lupus familiaris (Dog).